The sequence spans 478 residues: Odorant receptor coreceptor (478 aa).

Over 1–41 (MQVQPTKYVGLVADLMPNIRLMQASGHFLFRYVTGPILIRK) the chain is Cytoplasmic. Residues 42 to 62 (VYSWWTLAMVLIQFFAILGNL) traverse the membrane as a helical segment. Residues 63–73 (ATNADDVNELT) lie on the Extracellular side of the membrane. A helical membrane pass occupies residues 74 to 94 (ANTITTLFFTHSVTKFIYFAV). The Cytoplasmic portion of the chain corresponds to 95–133 (NSENFYRTLAIWNQTNTHPLFAESDARYHSIALAKMRKL). Residues 134–154 (LVLVMATTVLSVVAWVTITFF) traverse the membrane as a helical segment. At 155–188 (GESVKTVLDKATNETYTVDIPRLPIKSWYPWNAM) the chain is on the extracellular side. An N-linked (GlcNAc...) asparagine glycan is attached at Asn167. Residues 189–209 (SGPAYIFSFIYQIYFLLFSMV) traverse the membrane as a helical segment. Topologically, residues 210–338 (QSNLADVMFC…AIKYWVERHK (129 aa)) are cytoplasmic. The helical transmembrane segment at 339–361 (HVVRLVSAIGDTYGPALLLHMLT) threads the bilayer. At 362–382 (STIKLTLLAYQATKIDGVNVY) the chain is on the extracellular side. Residues 383 to 403 (GLTVIGYLCYALAQVFLFCIF) traverse the membrane as a helical segment. Over 404–454 (GNRLIEESSSVMEAAYSCHWYDGSEEAKTFVQIVCQQCQKAMTISGAKFFT) the chain is Cytoplasmic. The helical transmembrane segment at 455–475 (VSLDLFASVLGAVVTYFMVLV) threads the bilayer. The Extracellular portion of the chain corresponds to 476-478 (QLK).

The protein belongs to the insect chemoreceptor superfamily. Heteromeric odorant receptor channel (TC 1.A.69) family. Orco subfamily. In terms of assembly, heterodimer with conventional odorant receptors (ORs). Complexes exist early in the endomembrane system in olfactory sensory neurons (OSNs), coupling these complexes to the conserved ciliary trafficking pathway. Expressed in olfactory and gustatory organs of both adult and immature stages. Highest expression is seen in adult antennae and the maxillary palps. Lower expression also seen in proboscis and legs. Within the antenna, expression originates in cell bodies and projects into the lumen of an individual sensillum, presumably along the dendritic extension of the neuron. Within the maxillary palps, expression is seen in a small number of cell bodies and in projections into the sensillar cone. Within the probiscus, expression is seen in a single type of sensillum on the outer surface of the labellar lobes.

It is found in the cell membrane. Functionally, odorant coreceptor which complexes with conventional odorant receptors (ORs) to form odorant-sensing units, providing sensitive and prolonged odorant signaling and calcium permeability. Orco is a universal and integral part of the functional odorant receptor, involved in the dendritic localization of other olfactory receptors. Can form functional ion channels in the absence of an odor-binding OR. Plays a key role in preferred attraction of females for humans over non-human hosts for blood feeding. Human attraction plays a crucial role in the transmission of Plasmodium protozoans by the mosquito leading to infection diseases like malaria. Also required for the response to N,N-Diethyl-meta-toluamide (DEET), the most widely used insect repellent worldwide. The polypeptide is Odorant receptor coreceptor (Orco) (Anopheles gambiae (African malaria mosquito)).